Reading from the N-terminus, the 62-residue chain is Conotoxin Lt5.8 (62 aa).

The signal sequence occupies residues 1–19 (MLCLPVFIILLLLVSPAAT). Residues 20 to 47 (MPVDLEILKAPTKESRKDFEMRIELLRS) constitute a propeptide that is removed on maturation. Position 50 is a pyrrolidone carboxylic acid (glutamine 50). Glutamine amide is present on glutamine 61.

The protein belongs to the conotoxin T superfamily. Post-translationally, contains 2 disulfide bonds that can be either 'C1-C3, C2-C4' or 'C1-C4, C2-C3', since these disulfide connectivities have been observed for conotoxins with cysteine framework V (for examples, see AC P0DQQ7 and AC P81755). As to expression, expressed by the venom duct.

It localises to the secreted. This chain is Conotoxin Lt5.8, found in Conus litteratus (Lettered cone).